The following is a 305-amino-acid chain: Glycine--tRNA ligase alpha subunit (305 aa).

It belongs to the class-II aminoacyl-tRNA synthetase family. Tetramer of two alpha and two beta subunits.

Its subcellular location is the cytoplasm. The catalysed reaction is tRNA(Gly) + glycine + ATP = glycyl-tRNA(Gly) + AMP + diphosphate. The sequence is that of Glycine--tRNA ligase alpha subunit from Streptococcus pyogenes serotype M4 (strain MGAS10750).